We begin with the raw amino-acid sequence, 164 residues long: 2-C-methyl-D-erythritol 2,4-cyclodiphosphate synthase (164 aa).

A divalent metal cation-binding residues include aspartate 8 and histidine 10. Residues 8-10 (DVH) and 34-35 (HS) contribute to the 4-CDP-2-C-methyl-D-erythritol 2-phosphate site. An a divalent metal cation-binding site is contributed by histidine 42. Residues 56-58 (DIG), 132-135 (TTEE), phenylalanine 139, and lysine 142 each bind 4-CDP-2-C-methyl-D-erythritol 2-phosphate.

Belongs to the IspF family. In terms of assembly, homotrimer. The cofactor is a divalent metal cation.

It carries out the reaction 4-CDP-2-C-methyl-D-erythritol 2-phosphate = 2-C-methyl-D-erythritol 2,4-cyclic diphosphate + CMP. It participates in isoprenoid biosynthesis; isopentenyl diphosphate biosynthesis via DXP pathway; isopentenyl diphosphate from 1-deoxy-D-xylulose 5-phosphate: step 4/6. Functionally, involved in the biosynthesis of isopentenyl diphosphate (IPP) and dimethylallyl diphosphate (DMAPP), two major building blocks of isoprenoid compounds. Catalyzes the conversion of 4-diphosphocytidyl-2-C-methyl-D-erythritol 2-phosphate (CDP-ME2P) to 2-C-methyl-D-erythritol 2,4-cyclodiphosphate (ME-CPP) with a corresponding release of cytidine 5-monophosphate (CMP). This chain is 2-C-methyl-D-erythritol 2,4-cyclodiphosphate synthase, found in Clostridium kluyveri (strain NBRC 12016).